The following is a 215-amino-acid chain: Vesicle-trafficking protein SEC22b-A (215 aa).

Residues 1–190 (MVLQTMIVRV…RSDAKYLNTR (190 aa)) lie on the Cytoplasmic side of the membrane. A Longin domain is found at 6 to 119 (MIVRVADSLP…YSFIEFDTYI (114 aa)). The v-SNARE coiled-coil homology domain maps to 134 to 194 (NLGNINSELH…KYLNTRSTYA (61 aa)). The chain crosses the membrane as a helical span at residues 191-213 (STYAKVAAGAVIIITLIIYVRFW). At 214-215 (WL) the chain is on the lumenal side.

Belongs to the synaptobrevin family. In terms of assembly, component of 2 distinct SNARE complexes.

Its subcellular location is the endoplasmic reticulum membrane. It is found in the endoplasmic reticulum-Golgi intermediate compartment membrane. The protein localises to the golgi apparatus. It localises to the cis-Golgi network membrane. The protein resides in the trans-Golgi network membrane. Its subcellular location is the melanosome. SNARE involved in targeting and fusion of ER-derived transport vesicles with the Golgi complex as well as Golgi-derived retrograde transport vesicles with the ER. In Danio rerio (Zebrafish), this protein is Vesicle-trafficking protein SEC22b-A.